A 349-amino-acid polypeptide reads, in one-letter code: MPMPPDDSALSLLPDHPLAAHNTFGIDATARFAARVTHAAQFAALHRDPRVAHLSQLVLGGGSNVVFTRDFDGVVLLDEIAGRRVVREDDDAWYVEAGGGETWHAFVAWTLEHGMPGLENLALIPGTVGAAPIQNIGAYGLEMKTYFDSLVAVELATGRSERFDAARCAFGYRDSFFKREGRGRFAIVAVTFRLPKRWTPRLGYADVTRELDARGIAPDAATPRDVFDAVVAIRRAKLPDPLELGNAGSFFKNPVIDAAQFDALRARVPDVVSYPQPGGQVKLAAGWLIDRCGWKGRTLGAAAVHDRQALVLVNRGGATGADVLALARAIQDDVRKQFGVELEPEPVCV.

Residues 24 to 197 enclose the FAD-binding PCMH-type domain; the sequence is FGIDATARFA…VAVTFRLPKR (174 aa). Residue arginine 173 is part of the active site. The active-site Proton donor is serine 249. Glutamate 345 is a catalytic residue.

The protein belongs to the MurB family. FAD is required as a cofactor.

The protein resides in the cytoplasm. The catalysed reaction is UDP-N-acetyl-alpha-D-muramate + NADP(+) = UDP-N-acetyl-3-O-(1-carboxyvinyl)-alpha-D-glucosamine + NADPH + H(+). Its pathway is cell wall biogenesis; peptidoglycan biosynthesis. Functionally, cell wall formation. This chain is UDP-N-acetylenolpyruvoylglucosamine reductase, found in Burkholderia ambifaria (strain MC40-6).